The primary structure comprises 202 residues: Glycerol-3-phosphate acyltransferase (202 aa).

The next 6 helical transmembrane spans lie at 2–22, 54–74, 88–108, 120–140, 141–161, and 162–182; these read MIVI…GYVI, FLVT…PLWL, NGLI…YLGF, VILG…FGIL, YLTK…VIGA, and LLIR…LLII.

This sequence belongs to the PlsY family. In terms of assembly, probably interacts with PlsX.

It is found in the cell membrane. It catalyses the reaction an acyl phosphate + sn-glycerol 3-phosphate = a 1-acyl-sn-glycero-3-phosphate + phosphate. It participates in lipid metabolism; phospholipid metabolism. In terms of biological role, catalyzes the transfer of an acyl group from acyl-phosphate (acyl-PO(4)) to glycerol-3-phosphate (G3P) to form lysophosphatidic acid (LPA). This enzyme utilizes acyl-phosphate as fatty acyl donor, but not acyl-CoA or acyl-ACP. This Staphylococcus saprophyticus subsp. saprophyticus (strain ATCC 15305 / DSM 20229 / NCIMB 8711 / NCTC 7292 / S-41) protein is Glycerol-3-phosphate acyltransferase.